The sequence spans 901 residues: MQTHEIRKRFLDHFVKAGHTEVPSASVILDDPNLLFVNAGMVQFVPFFLGQRTPPYATATSIQKCIRTPDIDEVGITTRHNTFFQMAGNFSFGDYFKRGAIELAWALLTNSVADGGYGLDPEKLWATVYLDDDEAAGLWREVAGLPADRIQRRGMADNYWSMGIPGPCGPSSEIYYDRGPDYGPEGGPVVNEDRYLEIWNLVFMQNERGEGTTKEDYEILGPLPRKNIDTGMGVERVALILQGVPNVYETDLLRPIIDLVAARAPRGYDQGNHADDVRYRIIADHSRTAAILIADGVSPGNDGRGYVLRRLLRRVIRSAKLLNIDTAIVGDLMATVRDAMGPSYPELASDSDRINRIAVAEETAFNRTLASGSRLFDEVAGATRSSGVSVVSGSDAFTLHDTYGFPIELTLEMASEAGLTVDEGGFRELMAQQRRRAKADAAARKHAHADLTAYRELVDAGPTEFTGFDELTSEARILGIFVDGKRVPVVAHGQAVDADRVELVLDRTPLYAESGGQIADVGTISGTGSGSSARAAVTDVQKIAKTLWLHRVNVESGEFVEGDGVVAAADAGWRKGATQGHSGTHMVHAALRQVLGPNAVQAGSLNRPGYLRFDFNWQGPLTEEQRGQIEEVTNQAVQADFAVHTFTEQLEKAKAMGAMALFGECYPDEVRVVEIGGPFSIELCGGTHVATSAQIGPVTILGESSIGSGVRRVEAYVGLDSFRHLAKERALMAGLASSLKVPSEEVPARVASLVERLKAAEKELERARLASVRAAAVNAAAGAERIGNVRLVAQRMSSEMTPADLRTLVGDIRGKLGSDPAVVALIAAPAGGESSTVPYVVAANQAAQGLGLGANELIKHLAAAVDGRGGGKADLAQGSGKKPAGIAAALEALRAEIARVG.

Zn(2+) contacts are provided by His-581, His-585, Cys-684, and His-688.

The protein belongs to the class-II aminoacyl-tRNA synthetase family. Requires Zn(2+) as cofactor.

It localises to the cytoplasm. It carries out the reaction tRNA(Ala) + L-alanine + ATP = L-alanyl-tRNA(Ala) + AMP + diphosphate. Catalyzes the attachment of alanine to tRNA(Ala) in a two-step reaction: alanine is first activated by ATP to form Ala-AMP and then transferred to the acceptor end of tRNA(Ala). Also edits incorrectly charged Ser-tRNA(Ala) and Gly-tRNA(Ala) via its editing domain. This Mycobacterium ulcerans (strain Agy99) protein is Alanine--tRNA ligase.